Reading from the N-terminus, the 403-residue chain is GDSL esterase/lipase At1g28590 (403 aa).

The N-terminal stretch at 1-27 is a signal peptide; sequence MASLDSLPAMKLVRFILSTLLVTSVNS. Ser43 serves as the catalytic Nucleophile. Asn139 and Asn323 each carry an N-linked (GlcNAc...) asparagine glycan. Residues Asp346 and His349 contribute to the active site.

The protein belongs to the 'GDSL' lipolytic enzyme family.

It localises to the secreted. The chain is GDSL esterase/lipase At1g28590 from Arabidopsis thaliana (Mouse-ear cress).